Here is a 145-residue protein sequence, read N- to C-terminus: uncharacterized protein (145 aa).

This is an uncharacterized protein from Methanothrix soehngenii (Methanosaeta concilii).